A 481-amino-acid chain; its full sequence is Phosphoglucosamine mutase (481 aa).

Residue Ser-128 is the Phosphoserine intermediate of the active site. Ser-128, Asp-269, Asp-271, and Asp-273 together coordinate Mg(2+). Residue Ser-128 is modified to Phosphoserine.

The protein belongs to the phosphohexose mutase family. Mg(2+) serves as cofactor. Activated by phosphorylation.

It catalyses the reaction alpha-D-glucosamine 1-phosphate = D-glucosamine 6-phosphate. Its function is as follows. Catalyzes the conversion of glucosamine-6-phosphate to glucosamine-1-phosphate. This is Phosphoglucosamine mutase from Synechocystis sp. (strain ATCC 27184 / PCC 6803 / Kazusa).